The primary structure comprises 853 residues: Protein translocase subunit SecA (853 aa).

ATP is bound by residues Gln77, 95 to 99 (GEGKT), and Asp532.

Belongs to the SecA family. In terms of assembly, monomer and homodimer. Part of the essential Sec protein translocation apparatus which comprises SecA, SecYEG and auxiliary proteins SecDF. Other proteins may also be involved.

Its subcellular location is the cell inner membrane. The protein resides in the cytoplasm. The catalysed reaction is ATP + H2O + cellular proteinSide 1 = ADP + phosphate + cellular proteinSide 2.. Its function is as follows. Part of the Sec protein translocase complex. Interacts with the SecYEG preprotein conducting channel. Has a central role in coupling the hydrolysis of ATP to the transfer of proteins into and across the cell membrane, serving as an ATP-driven molecular motor driving the stepwise translocation of polypeptide chains across the membrane. This is Protein translocase subunit SecA from Thermosipho melanesiensis (strain DSM 12029 / CIP 104789 / BI429).